A 256-amino-acid polypeptide reads, in one-letter code: Ribonuclease 3 (256 aa).

Residues 3–125 (LDALQQRLGY…IVGAVFLDAG (123 aa)) enclose the RNase III domain. E38 serves as a coordination point for Mg(2+). D42 is a catalytic residue. Residues D111 and E114 each coordinate Mg(2+). Residue E114 is part of the active site. Residues 152–222 (DAKTLLQEYL…AKLALDEVQK (71 aa)) form the DRBM domain. A disordered region spans residues 230–256 (RSRAERTGKTRKQPVPQDPQLSLRLKE).

It belongs to the ribonuclease III family. As to quaternary structure, homodimer. It depends on Mg(2+) as a cofactor.

Its subcellular location is the cytoplasm. The enzyme catalyses Endonucleolytic cleavage to 5'-phosphomonoester.. Its function is as follows. Digests double-stranded RNA. Involved in the processing of primary rRNA transcript to yield the immediate precursors to the large and small rRNAs (23S and 16S). Processes some mRNAs, and tRNAs when they are encoded in the rRNA operon. Processes pre-crRNA and tracrRNA of type II CRISPR loci if present in the organism. In Cupriavidus necator (strain ATCC 17699 / DSM 428 / KCTC 22496 / NCIMB 10442 / H16 / Stanier 337) (Ralstonia eutropha), this protein is Ribonuclease 3.